The sequence spans 348 residues: Dihydroorotase (348 aa).

His-13 and His-15 together coordinate Zn(2+). Residues His-15–Arg-17 and Asn-41 contribute to the substrate site. The Zn(2+) site is built by Lys-99, His-136, and His-174. Lys-99 carries the post-translational modification N6-carboxylysine. His-136 serves as a coordination point for substrate. Leu-219 contributes to the substrate binding site. Asp-247 lines the Zn(2+) pocket. The active site involves Asp-247. Substrate-binding residues include His-251 and Ala-263.

The protein belongs to the metallo-dependent hydrolases superfamily. DHOase family. Class II DHOase subfamily. In terms of assembly, homodimer. Requires Zn(2+) as cofactor.

The catalysed reaction is (S)-dihydroorotate + H2O = N-carbamoyl-L-aspartate + H(+). It functions in the pathway pyrimidine metabolism; UMP biosynthesis via de novo pathway; (S)-dihydroorotate from bicarbonate: step 3/3. In terms of biological role, catalyzes the reversible cyclization of carbamoyl aspartate to dihydroorotate. In Rhizobium johnstonii (strain DSM 114642 / LMG 32736 / 3841) (Rhizobium leguminosarum bv. viciae), this protein is Dihydroorotase.